A 273-amino-acid chain; its full sequence is Formamidopyrimidine-DNA glycosylase (273 aa).

P2 serves as the catalytic Schiff-base intermediate with DNA. E3 (proton donor) is an active-site residue. Catalysis depends on K57, which acts as the Proton donor; for beta-elimination activity. DNA is bound by residues H91, R110, and K151. An FPG-type zinc finger spans residues 236 to 270; sequence QVYGRKDEACNDCGTIIEAKVIGQRNSYFCPHCQM. R260 functions as the Proton donor; for delta-elimination activity in the catalytic mechanism.

It belongs to the FPG family. As to quaternary structure, monomer. Requires Zn(2+) as cofactor.

It carries out the reaction Hydrolysis of DNA containing ring-opened 7-methylguanine residues, releasing 2,6-diamino-4-hydroxy-5-(N-methyl)formamidopyrimidine.. The catalysed reaction is 2'-deoxyribonucleotide-(2'-deoxyribose 5'-phosphate)-2'-deoxyribonucleotide-DNA = a 3'-end 2'-deoxyribonucleotide-(2,3-dehydro-2,3-deoxyribose 5'-phosphate)-DNA + a 5'-end 5'-phospho-2'-deoxyribonucleoside-DNA + H(+). Involved in base excision repair of DNA damaged by oxidation or by mutagenic agents. Acts as a DNA glycosylase that recognizes and removes damaged bases. Has a preference for oxidized purines, such as 7,8-dihydro-8-oxoguanine (8-oxoG). Has AP (apurinic/apyrimidinic) lyase activity and introduces nicks in the DNA strand. Cleaves the DNA backbone by beta-delta elimination to generate a single-strand break at the site of the removed base with both 3'- and 5'-phosphates. The polypeptide is Formamidopyrimidine-DNA glycosylase (Actinobacillus pleuropneumoniae serotype 3 (strain JL03)).